A 639-amino-acid polypeptide reads, in one-letter code: Protein artemis (639 aa).

3 disordered regions span residues 450 to 496 (MDCT…LTSS), 515 to 570 (SELE…SQVD), and 590 to 617 (EAAE…VPQP). Acidic residues predominate over residues 454–466 (ESNDDDDDEDDAA). The segment covering 518-537 (ENSQNTQTLSTENTASQSPE) has biased composition (polar residues). Residues 548 to 560 (VHMSSSQSTHISD) show a composition bias toward low complexity.

It belongs to the DNA repair metallo-beta-lactamase (DRMBL) family.

The protein resides in the nucleus. In terms of biological role, may have a role in the processing of DNA double strand breaks (DSBs) prior to their repair by the non homologous end joining (NHEJ) pathway. Probably exhibits both exonuclease and endonuclease activity. The protein is Protein artemis (dclre1c) of Danio rerio (Zebrafish).